The chain runs to 481 residues: RAC-beta serine/threonine-protein kinase (481 aa).

At Met1 the chain carries N-acetylmethionine. A PH domain is found at 5–108; that stretch reads SVIKEGWLHK…WMRAIQMVAN (104 aa). Ser34 is subject to Phosphoserine. Cys60 and Cys77 are joined by a disulfide. Position 126 is a phosphoserine (Ser126). Ser128 and Ser131 each carry an O-linked (GlcNAc) serine glycan. Residues 152–409 form the Protein kinase domain; it reads FDYLKLLGKG…AKEVMEHRFF (258 aa). ATP is bound by residues 158–166 and Lys181; that span reads LGKGTFGKV. The Proton acceptor role is filled by Asp275. Asn280 and Asp293 together coordinate Mn(2+). A disulfide bridge connects residues Cys297 and Cys311. A glycan (O-linked (GlcNAc) threonine) is linked at Thr306. Thr309 is subject to Phosphothreonine; by PDPK1. O-linked (GlcNAc) threonine glycosylation occurs at Thr313. Positions 410–481 constitute an AGC-kinase C-terminal domain; the sequence is LSINWQDVVQ…QFSYSASIRE (72 aa). Ser447 is subject to Phosphoserine. Thr451 carries the phosphothreonine modification. Ser474 and Ser478 each carry phosphoserine; by MTOR. O-linked (GlcNAc) serine; alternate glycosylation is present at Ser474.

It belongs to the protein kinase superfamily. AGC Ser/Thr protein kinase family. RAC subfamily. As to quaternary structure, interacts with BTBD10. Interacts with KCTD20. Interacts (via PH domain) with MTCP1, TCL1A and TCL1B; this interaction may facilitate AKT2 oligomerization and phosphorylation, hence increasing kinase activity. Interacts with PHB2; this interaction may be important for myogenic differentiation. Interacts (when phosphorylated) with CLIP3/ClipR-59; this interaction promotes cell membrane localization. Interacts with WDFY2 (via WD repeats 1-3). In terms of processing, phosphorylation on Thr-309 and Ser-474 is required for full activity. Phosphorylation of the activation loop at Thr-309 by PDPK1/PDK1 is a prerequisite for full activation. Phosphorylated and activated by PDPK1/PDK1 in the presence of phosphatidylinositol 3,4,5-trisphosphate. Phosphorylation by mTORC2 in response to growth factors plays a key role in AKT1 activation: mTORC2 phosphorylates different sites depending on the context, such as Ser-474 or Ser-478, thereby facilitating subsequent phosphorylation of the activation loop by PDPK1/PDK1. Post-translationally, ubiquitinated; undergoes both 'Lys-48'- and 'Lys-63'-linked polyubiquitination. TRAF6-induced 'Lys-63'-linked AKT2 ubiquitination. When fully phosphorylated and translocated into the nucleus, undergoes 'Lys-48'-polyubiquitination catalyzed by TTC3, leading to its degradation by the proteasome. O-GlcNAcylation at Thr-306 and Thr-313 inhibits activating phosphorylation at Thr-309 via disrupting the interaction between AKT and PDPK1/PDK1.

The protein resides in the cytoplasm. It is found in the nucleus. Its subcellular location is the cell membrane. The protein localises to the early endosome. The catalysed reaction is L-seryl-[protein] + ATP = O-phospho-L-seryl-[protein] + ADP + H(+). It catalyses the reaction L-threonyl-[protein] + ATP = O-phospho-L-threonyl-[protein] + ADP + H(+). Its activity is regulated as follows. Two specific sites, one in the kinase domain (Thr-309) and the other in the C-terminal regulatory region (Ser-474), need to be phosphorylated for its full activation. AKT2 phosphorylation of PKP1 is induced by insulin. Inhibited by Akt inhibitor MK2206. AKT2 is one of 3 closely related serine/threonine-protein kinases (AKT1, AKT2 and AKT3) called the AKT kinases, and which regulate many processes including metabolism, proliferation, cell survival, growth and angiogenesis. This is mediated through serine and/or threonine phosphorylation of a range of downstream substrates. Over 100 substrate candidates have been reported so far, but for most of them, no isoform specificity has been reported. AKT is responsible of the regulation of glucose uptake by mediating insulin-induced translocation of the SLC2A4/GLUT4 glucose transporter to the cell surface. Phosphorylation of PTPN1 at 'Ser-50' negatively modulates its phosphatase activity preventing dephosphorylation of the insulin receptor and the attenuation of insulin signaling. Phosphorylation of TBC1D4 triggers the binding of this effector to inhibitory 14-3-3 proteins, which is required for insulin-stimulated glucose transport. AKT also regulates the storage of glucose in the form of glycogen by phosphorylating GSK3A at 'Ser-21' and GSK3B at 'Ser-9', resulting in inhibition of its kinase activity. Phosphorylation of GSK3 isoforms by AKT is also thought to be one mechanism by which cell proliferation is driven. AKT also regulates cell survival via the phosphorylation of MAP3K5 (apoptosis signal-related kinase). Phosphorylation of 'Ser-83' decreases MAP3K5 kinase activity stimulated by oxidative stress and thereby prevents apoptosis. AKT mediates insulin-stimulated protein synthesis by phosphorylating TSC2 at 'Ser-939' and 'Thr-1462', thereby activating mTORC1 signaling and leading to both phosphorylation of 4E-BP1 and in activation of RPS6KB1. AKT is involved in the phosphorylation of members of the FOXO factors (Forkhead family of transcription factors), leading to binding of 14-3-3 proteins and cytoplasmic localization. In particular, FOXO1 is phosphorylated at 'Thr-24', 'Ser-256' and 'Ser-319'. FOXO3 and FOXO4 are phosphorylated on equivalent sites. AKT has an important role in the regulation of NF-kappa-B-dependent gene transcription and positively regulates the activity of CREB1 (cyclic AMP (cAMP)-response element binding protein). The phosphorylation of CREB1 induces the binding of accessory proteins that are necessary for the transcription of pro-survival genes such as BCL2 and MCL1. AKT phosphorylates 'Ser-454' on ATP citrate lyase (ACLY), thereby potentially regulating ACLY activity and fatty acid synthesis. Activates the 3B isoform of cyclic nucleotide phosphodiesterase (PDE3B) via phosphorylation of 'Ser-273', resulting in reduced cyclic AMP levels and inhibition of lipolysis. Phosphorylates PIKFYVE on 'Ser-318', which results in increased PI(3)P-5 activity. The Rho GTPase-activating protein DLC1 is another substrate and its phosphorylation is implicated in the regulation cell proliferation and cell growth. AKT plays a role as key modulator of the AKT-mTOR signaling pathway controlling the tempo of the process of newborn neurons integration during adult neurogenesis, including correct neuron positioning, dendritic development and synapse formation. Signals downstream of phosphatidylinositol 3-kinase (PI(3)K) to mediate the effects of various growth factors such as platelet-derived growth factor (PDGF), epidermal growth factor (EGF), insulin and insulin-like growth factor I (IGF-I). AKT mediates the antiapoptotic effects of IGF-I. Essential for the SPATA13-mediated regulation of cell migration and adhesion assembly and disassembly. May be involved in the regulation of the placental development. In response to lysophosphatidic acid stimulation, inhibits the ciliogenesis cascade. In this context, phosphorylates WDR44, hence stabilizing its interaction with Rab11 and preventing the formation of the ciliogenic Rab11-FIP3-RAB3IP complex. Also phosphorylates RAB3IP/Rabin8, thus may affect RAB3IP guanine nucleotide exchange factor (GEF) activity toward Rab8, which is important for cilia growth. Phosphorylates PKP1, facilitating its interaction with YWHAG and translocation to the nucleus, ultimately resulting in a reduction in keratinocyte intercellular adhesion. Phosphorylation of PKP1 increases PKP1 protein stability, translocation to the cytoplasm away from desmosome plaques and PKP1-driven cap-dependent translation. Its function is as follows. Several AKT2-specific substrates have been identified, including ANKRD2, C2CD5, CLK2 and PITX2. May play a role in myoblast differentiation. In this context, may act through PITX2 phosphorylation. Unphosphorylated PITX2 associates with an ELAVL1/HuR-containing complex, which stabilizes cyclin mRNA and ensuring cell proliferation. Phosphorylation by AKT2 impairs this association, leading to CCND1 mRNA destabilization and progression towards differentiation. Also involved in the negative regulation of myogenesis in response to stress conditions. In this context, acts by phosphorylating ANKRD2. May also be a key regulator of glucose uptake. Regulates insulin-stimulated glucose transport by the increase of glucose transporter GLUT4 translocation from intracellular stores to the plasma membrane. In this context, acts by phosphorylating C2CD5/CDP138 on 'Ser-197' in insulin-stimulated adipocytes. Through the phosphorylation of CLK2 on 'Thr-343', involved in insulin-regulated suppression of hepatic gluconeogenesis. In Mus musculus (Mouse), this protein is RAC-beta serine/threonine-protein kinase (Akt2).